Here is a 220-residue protein sequence, read N- to C-terminus: Superoxide dismutase [Fe] (220 aa).

Fe cation contacts are provided by His-26, His-73, Asp-164, and His-168.

This sequence belongs to the iron/manganese superoxide dismutase family. As to quaternary structure, homodimer. It depends on Fe cation as a cofactor.

It catalyses the reaction 2 superoxide + 2 H(+) = H2O2 + O2. In terms of biological role, destroys superoxide anion radicals which are normally produced within the cells and which are toxic to biological systems. In Campylobacter jejuni subsp. jejuni serotype O:2 (strain ATCC 700819 / NCTC 11168), this protein is Superoxide dismutase [Fe] (sodB).